Consider the following 241-residue polypeptide: Ribosome-recycling factor, mitochondrial (241 aa).

It belongs to the RRF family.

The protein localises to the mitochondrion. In terms of biological role, necessary for protein synthesis in mitochondria. Functions as a ribosome recycling factor in mitochondria. The protein is Ribosome-recycling factor, mitochondrial (RRF1) of Kluyveromyces lactis (strain ATCC 8585 / CBS 2359 / DSM 70799 / NBRC 1267 / NRRL Y-1140 / WM37) (Yeast).